We begin with the raw amino-acid sequence, 199 residues long: Protein GrpE (199 aa).

Residues 1 to 24 show a composition bias toward basic and acidic residues; the sequence is MSKQNKKDWKKFKDEHKEEHKVEN. Residues 1 to 47 form a disordered region; sequence MSKQNKKDWKKFKDEHKEEHKVENEILEEEIDEKSQHQEPALGHPSY.

This sequence belongs to the GrpE family. As to quaternary structure, homodimer.

It is found in the cytoplasm. Its function is as follows. Participates actively in the response to hyperosmotic and heat shock by preventing the aggregation of stress-denatured proteins, in association with DnaK and GrpE. It is the nucleotide exchange factor for DnaK and may function as a thermosensor. Unfolded proteins bind initially to DnaJ; upon interaction with the DnaJ-bound protein, DnaK hydrolyzes its bound ATP, resulting in the formation of a stable complex. GrpE releases ADP from DnaK; ATP binding to DnaK triggers the release of the substrate protein, thus completing the reaction cycle. Several rounds of ATP-dependent interactions between DnaJ, DnaK and GrpE are required for fully efficient folding. The sequence is that of Protein GrpE from Legionella pneumophila (strain Paris).